We begin with the raw amino-acid sequence, 132 residues long: Fatty acid-binding protein, intestinal (132 aa).

A2 is subject to N-acetylalanine. W83 and R107 together coordinate hexadecanoate. Tetradecanoate contacts are provided by W83 and R107.

It belongs to the calycin superfamily. Fatty-acid binding protein (FABP) family. In terms of tissue distribution, expressed in the small intestine. Highest expression levels in the proximal ileum.

The protein resides in the cytoplasm. FABPs are thought to play a role in the intracellular transport of long-chain fatty acids and their acyl-CoA esters. FABP2 is probably involved in triglyceride-rich lipoprotein synthesis. Binds saturated long-chain fatty acids with a high affinity, but binds with a lower affinity to unsaturated long-chain fatty acids. FABP2 may also help maintain energy homeostasis by functioning as a lipid sensor. The chain is Fatty acid-binding protein, intestinal (Fabp2) from Mus musculus (Mouse).